Here is a 600-residue protein sequence, read N- to C-terminus: Proline--tRNA ligase (600 aa).

The protein belongs to the class-II aminoacyl-tRNA synthetase family. ProS type 1 subfamily. In terms of assembly, homodimer.

It is found in the cytoplasm. It carries out the reaction tRNA(Pro) + L-proline + ATP = L-prolyl-tRNA(Pro) + AMP + diphosphate. Catalyzes the attachment of proline to tRNA(Pro) in a two-step reaction: proline is first activated by ATP to form Pro-AMP and then transferred to the acceptor end of tRNA(Pro). As ProRS can inadvertently accommodate and process non-cognate amino acids such as alanine and cysteine, to avoid such errors it has two additional distinct editing activities against alanine. One activity is designated as 'pretransfer' editing and involves the tRNA(Pro)-independent hydrolysis of activated Ala-AMP. The other activity is designated 'posttransfer' editing and involves deacylation of mischarged Ala-tRNA(Pro). The misacylated Cys-tRNA(Pro) is not edited by ProRS. This Prochlorococcus marinus (strain MIT 9211) protein is Proline--tRNA ligase.